We begin with the raw amino-acid sequence, 204 residues long: LexA repressor (204 aa).

The segment at residues 31–51 (VREICAKVGLSSTSTVHGHLS) is a DNA-binding region (H-T-H motif). Residues Ser128 and Lys165 each act as for autocatalytic cleavage activity in the active site.

Belongs to the peptidase S24 family. In terms of assembly, homodimer.

The enzyme catalyses Hydrolysis of Ala-|-Gly bond in repressor LexA.. Represses a number of genes involved in the response to DNA damage (SOS response), including recA and lexA. In the presence of single-stranded DNA, RecA interacts with LexA causing an autocatalytic cleavage which disrupts the DNA-binding part of LexA, leading to derepression of the SOS regulon and eventually DNA repair. The chain is LexA repressor from Clostridium acetobutylicum (strain ATCC 824 / DSM 792 / JCM 1419 / IAM 19013 / LMG 5710 / NBRC 13948 / NRRL B-527 / VKM B-1787 / 2291 / W).